Reading from the N-terminus, the 157-residue chain is MVFDPRTLDQPKDISAYRDQRYQGSVRDQELALRTSCTLYVGNLSYYTKEDQVYELFGRAGDVRRVIMGLDRFKKTPCGFCFVEYYTREDAELALQNISNTRMDDRVIRADWDAGFVEGRQYGRGKHGGQVRDEYRKDYDPERGGYNRAIAQKSMVE.

MRNA-binding positions include Y17, Y40, R109–D113, R120–R124, and Q130–V131. The RRM domain maps to C37–G115.

The protein belongs to the RRM NCBP2 family. In terms of assembly, component of the nuclear cap-binding complex (CBC), a heterodimer composed of ncbp-1 and ncbp-2 that interacts with m7GpppG-capped RNA.

It localises to the nucleus. Its function is as follows. Component of the cap-binding complex (CBC), which binds co-transcriptionally to the 5' cap of pre-mRNAs and is involved in various processes such as pre-mRNA splicing and RNA-mediated gene silencing (RNAi). The CBC complex is involved in miRNA-mediated RNA interference and is required for primary microRNAs (miRNAs) processing. In the CBC complex, ncbp-2 recognizes and binds capped RNAs (m7GpppG-capped RNA) but requires ncbp-1 to stabilize the movement of its N-terminal loop and lock the CBC into a high affinity cap-binding state with the cap structure. The polypeptide is Nuclear cap-binding protein subunit 2 (ncbp-2) (Caenorhabditis briggsae).